A 1032-amino-acid chain; its full sequence is Argonaute protein hrde-1 (1032 aa).

Disordered regions lie at residues 1–51 and 298–375; these read MADL…PIGR and KLSE…YSPS. The segment at 1 to 551 is required to recruit the small-RNA amplification machinery to gene targets and promote gene silencing; the sequence is MADLLDKIMG…IQMTAKLLPP (551 aa). Over residues 18-33 the composition is skewed to basic and acidic residues; the sequence is PKRDNRMNQDKDEPTS. Positions 303–313 are enriched in gly residues; the sequence is KGGGGGRGGYG. 2 stretches are compositionally biased toward basic and acidic residues: residues 315-335 and 343-364; these read SDSR…RDFR and GNDR…RRDS. The PAZ domain occupies 376–481; that stretch reads DAAELEHAFG…FPMELLRIAP (106 aa). The 328-residue stretch at 650 to 977 folds into the Piwi domain; it reads DILVGIAREK…LAKRGRNNYK (328 aa).

The protein belongs to the argonaute family. WAGO subfamily. In terms of tissue distribution, expressed in the nuclei of male and female germ cells.

The protein resides in the cytoplasm. It localises to the cytoplasmic ribonucleoprotein granule. The protein localises to the nucleus. Its function is as follows. Argonaute protein which is involved in the endogenous small interfering RNA (endo-siRNA) pathway and is required for RNA-mediated gene silencing (RNAi) in the germline. Interacts with secondary 22G-RNAs in an hrde-2-dependent manner; 22G-RNAs are RNA-dependent RNA polymerase-derived endo-siRNAs, typically 22 nucleotides in length with a 5'-guanosine residue. Plays a key role in transgenerational epigenetic inheritance and germline immortality. May be involved in transgenerational gene silencing both by inducing subnuclear-co-localization of target genes into heterochromatin and by activation of small RNA amplification in the nuage. The sequence is that of Argonaute protein hrde-1 from Caenorhabditis elegans.